A 361-amino-acid chain; its full sequence is S-adenosylmethionine:tRNA ribosyltransferase-isomerase (361 aa).

It belongs to the QueA family. In terms of assembly, monomer.

The protein resides in the cytoplasm. It catalyses the reaction 7-aminomethyl-7-carbaguanosine(34) in tRNA + S-adenosyl-L-methionine = epoxyqueuosine(34) in tRNA + adenine + L-methionine + 2 H(+). Its pathway is tRNA modification; tRNA-queuosine biosynthesis. In terms of biological role, transfers and isomerizes the ribose moiety from AdoMet to the 7-aminomethyl group of 7-deazaguanine (preQ1-tRNA) to give epoxyqueuosine (oQ-tRNA). The sequence is that of S-adenosylmethionine:tRNA ribosyltransferase-isomerase from Actinobacillus pleuropneumoniae serotype 5b (strain L20).